The sequence spans 486 residues: UDP-N-acetylmuramate--L-alanine ligase (486 aa).

ATP is bound at residue 126-132; the sequence is GTHGKTT.

Belongs to the MurCDEF family.

It is found in the cytoplasm. The catalysed reaction is UDP-N-acetyl-alpha-D-muramate + L-alanine + ATP = UDP-N-acetyl-alpha-D-muramoyl-L-alanine + ADP + phosphate + H(+). The protein operates within cell wall biogenesis; peptidoglycan biosynthesis. Its function is as follows. Cell wall formation. The chain is UDP-N-acetylmuramate--L-alanine ligase from Pectobacterium carotovorum subsp. carotovorum (strain PC1).